Consider the following 546-residue polypeptide: Chaperonin GroEL 2 (546 aa).

ATP contacts are provided by residues threonine 30–proline 33, lysine 51, aspartate 87–threonine 91, glycine 415, asparagine 479–alanine 481, and aspartate 495.

Belongs to the chaperonin (HSP60) family. As to quaternary structure, forms a cylinder of 14 subunits composed of two heptameric rings stacked back-to-back. Interacts with the co-chaperonin GroES.

The protein localises to the cytoplasm. The enzyme catalyses ATP + H2O + a folded polypeptide = ADP + phosphate + an unfolded polypeptide.. Its function is as follows. Together with its co-chaperonin GroES, plays an essential role in assisting protein folding. The GroEL-GroES system forms a nano-cage that allows encapsulation of the non-native substrate proteins and provides a physical environment optimized to promote and accelerate protein folding. The sequence is that of Chaperonin GroEL 2 from Chromobacterium violaceum (strain ATCC 12472 / DSM 30191 / JCM 1249 / CCUG 213 / NBRC 12614 / NCIMB 9131 / NCTC 9757 / MK).